The following is a 225-amino-acid chain: Imidazoleglycerol-phosphate dehydratase (225 aa).

It belongs to the imidazoleglycerol-phosphate dehydratase family.

The catalysed reaction is D-erythro-1-(imidazol-4-yl)glycerol 3-phosphate = 3-(imidazol-4-yl)-2-oxopropyl phosphate + H2O. It participates in amino-acid biosynthesis; L-histidine biosynthesis; L-histidine from 5-phospho-alpha-D-ribose 1-diphosphate: step 6/9. In Pyricularia oryzae (strain 70-15 / ATCC MYA-4617 / FGSC 8958) (Rice blast fungus), this protein is Imidazoleglycerol-phosphate dehydratase (PTH3).